Consider the following 681-residue polypeptide: Mitosis inhibitor nif1 (681 aa).

Residues 22–43 (LNKKDGNDDDKAEHSKRSGYHG) form a disordered region. Residues 23-37 (NKKDGNDDDKAEHSK) are compositionally biased toward basic and acidic residues. At S70 the chain carries Phosphoserine. Disordered stretches follow at residues 80–104 (TTSG…SSPF) and 182–324 (YYHE…SSRQ). Positions 92–103 (ESPASPAEASSP) are enriched in low complexity. The segment covering 191–203 (TASNTSPTPNSIK) has biased composition (polar residues). S196 is modified (phosphoserine). The segment covering 238–278 (SSGDSTPLSGSSSSKGMLMSMSTSENHSLSSNPELSNSNLL) has biased composition (low complexity). Positions 296-306 (SSKEPDKEHST) are enriched in basic and acidic residues. Sel1-like repeat units follow at residues 547-582 (ALIL…AWGD) and 583-618 (ADAQ…FQGI).

Its subcellular location is the cytoplasm. Its function is as follows. Functions as a negative regulator of mitosis. It interacts with the C-terminal of nim1, thereby inhibiting its kinase activity which phosphorylates wee1. This is Mitosis inhibitor nif1 (nif1) from Schizosaccharomyces pombe (strain 972 / ATCC 24843) (Fission yeast).